The following is a 385-amino-acid chain: Arginine biosynthesis bifunctional protein ArgJ (385 aa).

Substrate-binding residues include T142, K168, T179, E259, N380, and T385. The active-site Nucleophile is the T179.

It belongs to the ArgJ family. As to quaternary structure, heterotetramer of two alpha and two beta chains.

The protein resides in the cytoplasm. It catalyses the reaction N(2)-acetyl-L-ornithine + L-glutamate = N-acetyl-L-glutamate + L-ornithine. The catalysed reaction is L-glutamate + acetyl-CoA = N-acetyl-L-glutamate + CoA + H(+). Its pathway is amino-acid biosynthesis; L-arginine biosynthesis; L-ornithine and N-acetyl-L-glutamate from L-glutamate and N(2)-acetyl-L-ornithine (cyclic): step 1/1. The protein operates within amino-acid biosynthesis; L-arginine biosynthesis; N(2)-acetyl-L-ornithine from L-glutamate: step 1/4. Functionally, catalyzes two activities which are involved in the cyclic version of arginine biosynthesis: the synthesis of N-acetylglutamate from glutamate and acetyl-CoA as the acetyl donor, and of ornithine by transacetylation between N(2)-acetylornithine and glutamate. This is Arginine biosynthesis bifunctional protein ArgJ from Leptospira interrogans serogroup Icterohaemorrhagiae serovar Lai (strain 56601).